Consider the following 334-residue polypeptide: Pre-mRNA leakage protein 39 (334 aa).

Interacts with MLP1 and MLP2.

It is found in the nucleus membrane. Its function is as follows. Involved in the nuclear retention of improperly spliced pre-mRNAs. The sequence is that of Pre-mRNA leakage protein 39 (PML39) from Saccharomyces cerevisiae (strain ATCC 204508 / S288c) (Baker's yeast).